The chain runs to 132 residues: Guanyl-specific ribonuclease C2 (132 aa).

The first 26 residues, 1–26, serve as a signal peptide directing secretion; sequence MLYNKLITIAALLVPALAAPQGLDVR. Intrachain disulfides connect C28/C36 and C32/C129. H66 is an active-site residue. E84 functions as the Proton acceptor in the catalytic mechanism. H118 (proton donor) is an active-site residue.

The protein belongs to the ribonuclease N1/T1 family.

The protein resides in the secreted. It catalyses the reaction [RNA] containing guanosine + H2O = an [RNA fragment]-3'-guanosine-3'-phosphate + a 5'-hydroxy-ribonucleotide-3'-[RNA fragment].. The sequence is that of Guanyl-specific ribonuclease C2 from Aspergillus clavatus (strain ATCC 1007 / CBS 513.65 / DSM 816 / NCTC 3887 / NRRL 1 / QM 1276 / 107).